We begin with the raw amino-acid sequence, 398 residues long: uncharacterized protein (398 aa).

This is an uncharacterized protein from Neisseria meningitidis serogroup B (strain ATCC BAA-335 / MC58).